We begin with the raw amino-acid sequence, 522 residues long: Tryptophan 2-halogenase (522 aa).

FAD contacts are provided by Ala-17, Glu-36, Arg-42, His-44, Ile-45, Ser-48, Arg-103, Ile-127, and Asp-296. The chloride site is built by Ser-307 and Gly-308. Val-309 serves as a coordination point for FAD.

This sequence belongs to the flavin-dependent halogenase family.

Its function is as follows. Involved in the incorporation of a chlorinated tryptophan residue into halogenated forms of the secondary metabolites called chondramides. The polypeptide is Tryptophan 2-halogenase (Chondromyces crocatus).